Here is a 311-residue protein sequence, read N- to C-terminus: Formimidoylglutamase (311 aa).

Mn(2+)-binding residues include H130, D155, H157, D159, C242, and D244.

It belongs to the arginase family. Requires Mn(2+) as cofactor.

The enzyme catalyses N-formimidoyl-L-glutamate + H2O = formamide + L-glutamate. Its pathway is amino-acid degradation; L-histidine degradation into L-glutamate; L-glutamate from N-formimidoyl-L-glutamate (hydrolase route): step 1/1. Its function is as follows. Catalyzes the conversion of N-formimidoyl-L-glutamate to L-glutamate and formamide. The protein is Formimidoylglutamase of Staphylococcus epidermidis (strain ATCC 35984 / DSM 28319 / BCRC 17069 / CCUG 31568 / BM 3577 / RP62A).